A 199-amino-acid polypeptide reads, in one-letter code: Transmembrane protein 9B (199 aa).

The signal sequence occupies residues 1-34; sequence MASLWCGNLLRLGSGLSMSCLALSVLLLAQLTGA. An N-linked (GlcNAc...) asparagine glycan is attached at asparagine 61. The helical transmembrane segment at 106 to 126 threads the bilayer; it reads IIIYLSILGLLLLYMVYLTLV. Phosphoserine is present on residues serine 143 and serine 190.

The protein belongs to the TMEM9 family. In terms of processing, N-glycosylated.

It is found in the lysosome membrane. The protein localises to the early endosome membrane. Enhances production of pro-inflammatory cytokines induced by TNF, IL1B, and TLR ligands. Has a role in TNF activation of both the NF-kappaB and MAPK pathways. The sequence is that of Transmembrane protein 9B (Tmem9b) from Mus musculus (Mouse).